The chain runs to 117 residues: Ig heavy chain V region 108A (117 aa).

The first 19 residues, 1–19 (MGWSWIFLFLLSGTAGVHS), serve as a signal peptide directing secretion. The region spanning 20-117 (EVQLQQSGPE…EDSAVYYCAR (98 aa)) is the Ig-like domain.

The chain is Ig heavy chain V region 108A (Igh-VJ558) from Mus musculus (Mouse).